A 231-amino-acid polypeptide reads, in one-letter code: Lipoprotein-releasing system ATP-binding protein LolD (231 aa).

The 226-residue stretch at 6–231 (LQVQAVSKSY…YLQAVAEHAQ (226 aa)) folds into the ABC transporter domain. 42-49 (GTSGSGKS) is a binding site for ATP.

It belongs to the ABC transporter superfamily. Lipoprotein translocase (TC 3.A.1.125) family. In terms of assembly, the complex is composed of two ATP-binding proteins (LolD) and two transmembrane proteins (LolC and LolE).

It is found in the cell inner membrane. Functionally, part of the ABC transporter complex LolCDE involved in the translocation of mature outer membrane-directed lipoproteins, from the inner membrane to the periplasmic chaperone, LolA. Responsible for the formation of the LolA-lipoprotein complex in an ATP-dependent manner. This is Lipoprotein-releasing system ATP-binding protein LolD from Shewanella sp. (strain MR-4).